Reading from the N-terminus, the 163-residue chain is tRNA-acetylating toxin 2 (163 aa).

Acetyl-CoA-binding residues include L89, V91, H96, G97, Q98, G99, A101, R102, and E132. Y137 is a catalytic residue. Acetyl-CoA is bound at residue R139.

This sequence belongs to the acetyltransferase family. GNAT subfamily. Homodimer (in absence of antitoxin). Forms a complex with cognate antitoxin TacA2. Forms a 4:2 antitoxin:toxin complex with cognate antitoxin TacA2.

It carries out the reaction glycyl-tRNA(Gly) + acetyl-CoA = N-acetylglycyl-tRNA(Gly) + CoA + H(+). Toxic component of a type II toxin-antitoxin (TA) system. Acetylates tRNA and inhibits translation. Acetylates exclusively Gly in situ. Overexpression during the lag phase of a tacA2-tacT2 deletion strain leads to very small increase in persister cells in the presence of cefotaxime but no detectable growth phenotype in absence of antibiotics. Compared to a protein with a single amino acid change (TacT2 from S.enterica NCTC 13349, Glu-29 is Lys in NCTC 13349) this protein binds tRNA very poorly and acetylates tRNA very poorly. Persister cell formation is neutralized by cognate antitoxin TacA2. Neutralized only by cognate antitoxin TacA2 (A8), but not by TacA1 or TacA3. Plays a role in persister cell formation. Its function is as follows. The TacA2-TacT2 complex both represses and derepresses expression of its own operon. The polypeptide is tRNA-acetylating toxin 2 (Salmonella typhimurium (strain 14028s / SGSC 2262)).